We begin with the raw amino-acid sequence, 79 residues long: NADH-ubiquinone oxidoreductase chain 4 (79 aa).

Transmembrane regions (helical) follow at residues 24–44 (SYTL…LANI) and 54–74 (LLIN…WFLL).

Belongs to the complex I subunit 4 family.

Its subcellular location is the mitochondrion membrane. The catalysed reaction is a ubiquinone + NADH + 5 H(+)(in) = a ubiquinol + NAD(+) + 4 H(+)(out). Its function is as follows. Core subunit of the mitochondrial membrane respiratory chain NADH dehydrogenase (Complex I) that is believed to belong to the minimal assembly required for catalysis. Complex I functions in the transfer of electrons from NADH to the respiratory chain. The immediate electron acceptor for the enzyme is believed to be ubiquinone. This Simulium vittatum (Striped black fly) protein is NADH-ubiquinone oxidoreductase chain 4 (ND4).